The primary structure comprises 369 residues: MFTDVVELTVSSGKGGQGCVSFRREKFVVNGGPNGGDGGKGGDIWFKCDNNTHTLSHFQKKMHIKADNGAPGESSNMSGKSGVKKVIIVPPGTQIIDMDSEEVLFDMLIDGQEELFISGGRGGLGNTHFKSSTNQRPTYAQPGEKGETRRIKLDLKLIADVGLVGFPNVGKSTLISTVSNARPEIANYEFTTLTPKLGQVNIGDFESFIMADIPGIIGGAHEGKGLGIEFLRHIERTQILLFMVDLASYRDLKEQIETLKAEVGAFSDKLGSSKYAIALTRADAVAQDEINDLVNSFMEIVGVKATSNSNLNFDKNLPYFIQDSADETLGYDREIPYFVMPISSATNKNIDPLKHALFNLVQTNRIYSK.

Positions 1–158 (MFTDVVELTV…RRIKLDLKLI (158 aa)) constitute an Obg domain. Residues 126–146 (NTHFKSSTNQRPTYAQPGEKG) form a disordered region. The segment covering 128-138 (HFKSSTNQRPT) has biased composition (polar residues). One can recognise an OBG-type G domain in the interval 159 to 362 (ADVGLVGFPN…LKHALFNLVQ (204 aa)). GTP-binding positions include 165–172 (GFPNVGKS), 190–194 (FTTLT), 212–215 (DIPG), 280–283 (TRAD), and 343–345 (SSA). Serine 172 and threonine 192 together coordinate Mg(2+).

This sequence belongs to the TRAFAC class OBG-HflX-like GTPase superfamily. OBG GTPase family. Monomer. Mg(2+) serves as cofactor.

The protein resides in the cytoplasm. In terms of biological role, an essential GTPase which binds GTP, GDP and possibly (p)ppGpp with moderate affinity, with high nucleotide exchange rates and a fairly low GTP hydrolysis rate. Plays a role in control of the cell cycle, stress response, ribosome biogenesis and in those bacteria that undergo differentiation, in morphogenesis control. This Sulfurimonas denitrificans (strain ATCC 33889 / DSM 1251) (Thiomicrospira denitrificans (strain ATCC 33889 / DSM 1251)) protein is GTPase Obg.